Reading from the N-terminus, the 517-residue chain is Mucin-like protein 3 (517 aa).

Residues 1–29 (MAQPVHSLCSAFGLQCCLLFLLASWGAGA) form the signal peptide. Topologically, residues 30-448 (TTFQEYQKTG…GENDSFPAWA (419 aa)) are extracellular. The interval 67 to 341 (SGQRPPELPK…PTENLGNTTL (275 aa)) is disordered. The span at 83-93 (QKRHCNTTRHS) shows a compositional bias: basic residues. Residue Asn-88 is glycosylated (N-linked (GlcNAc...) asparagine). The segment covering 105-116 (TIDHKSSTDNHE) has biased composition (basic and acidic residues). N-linked (GlcNAc...) asparagine glycosylation occurs at Asn-124. A compositionally biased stretch (polar residues) spans 169–179 (RKSTTGKSTVT). Residues 180-190 (RKSDKTGRPLE) show a composition bias toward basic and acidic residues. Over residues 194 to 213 (STLDKTSTSSHKTTTSFHNS) the composition is skewed to low complexity. 3 stretches are compositionally biased toward polar residues: residues 214 to 225 (GNSQTKQKSTSF), 232 to 243 (ASKTTYKTTGTP), and 263 to 283 (TKTTKNIQETISANELTQSLA). Residues 305–317 (TENRERTANENKK) are compositionally biased toward basic and acidic residues. The N-linked (GlcNAc...) asparagine glycan is linked to Asn-338. Residues 449 to 469 (IVIVVLVAVILLLVFLGLIFL) traverse the membrane as a helical segment. At 470–517 (VSYMMRTRRTLTQNTQYNDAEDEGGPNSYPVYLMEQQNLGMGQIPSPR) the chain is on the cytoplasmic side.

Detected in lung, esophagus, stomach, rectum, skin, cervix, testis, kidney, uterus and small intestine. Expressed in pancreas (at protein level).

The protein localises to the cell membrane. The protein resides in the cytoplasm. In terms of biological role, may modulate NF-kappaB signaling and play a role in cell growth. The polypeptide is Mucin-like protein 3 (Homo sapiens (Human)).